The primary structure comprises 754 residues: Fibronectin type III domain-containing protein 1 (754 aa).

Positions 1–19 are cleaved as a signal peptide; sequence MKSWISISFLCMLFPLSNG. 3 disordered regions span residues 40 to 61, 85 to 106, and 130 to 163; these read SLQGTAPTSQYPQGGTQISQGG, AQISQGGGQGISQGATQGTQFS, and AQHSQAGAQGSQFPQSAAHTAQHHQGTAQPAQSG. Residues 130 to 161 are compositionally biased toward low complexity; sequence AQHSQAGAQGSQFPQSAAHTAQHHQGTAQPAQ. Fibronectin type-III domains follow at residues 250-355, 359-449, 453-545, 549-642, and 645-742; these read PPQS…TPDL, APLN…TDKF, APRN…TKMD, EPMS…LPKP, and LVPN…SFPG. Residues 731-754 form a disordered region; it reads SNLSSQQFSFPGQQVGQQQSNPWI.

In terms of tissue distribution, prismatic layer of shell (at protein level). Expressed primarily in the mantle with highest level in the outer epithelium of the mantle edge and lower level in the mantle pallium.

It localises to the secreted. This chain is Fibronectin type III domain-containing protein 1, found in Margaritifera margaritifera (Freshwater pearl mussel).